The chain runs to 360 residues: Photosystem II protein D1 (360 aa).

Transmembrane regions (helical) follow at residues 29–46 (YIGW…TATS), 118–133 (HFLL…EWEL), and 142–156 (WIFV…AASA). Chlorophyll a is bound at residue H118. A pheophytin a-binding site is contributed by Y126. [CaMn4O5] cluster is bound by residues D170 and E189. Residues 197-218 (FHMAGVAGVFGGSLFSAMHGSL) form a helical membrane-spanning segment. H198 is a chlorophyll a binding site. Residues H215 and 264-265 (SF) contribute to the a quinone site. H215 contributes to the Fe cation binding site. A Fe cation-binding site is contributed by H272. Residues 274 to 288 (FLAAWPVVGIWLTAL) form a helical membrane-spanning segment. [CaMn4O5] cluster is bound by residues H332, E333, D342, and A344. Residues 345–360 (SNEVLPVAVNAPAVNG) constitute a propeptide that is removed on maturation.

It belongs to the reaction center PufL/M/PsbA/D family. In terms of assembly, PSII is composed of 1 copy each of membrane proteins PsbA, PsbB, PsbC, PsbD, PsbE, PsbF, PsbH, PsbI, PsbJ, PsbK, PsbL, PsbM, PsbT, PsbX, PsbY, PsbZ, Psb30/Ycf12, at least 3 peripheral proteins of the oxygen-evolving complex and a large number of cofactors. It forms dimeric complexes. The D1/D2 heterodimer binds P680, chlorophylls that are the primary electron donor of PSII, and subsequent electron acceptors. It shares a non-heme iron and each subunit binds pheophytin, quinone, additional chlorophylls, carotenoids and lipids. D1 provides most of the ligands for the Mn4-Ca-O5 cluster of the oxygen-evolving complex (OEC). There is also a Cl(-1) ion associated with D1 and D2, which is required for oxygen evolution. The PSII complex binds additional chlorophylls, carotenoids and specific lipids. is required as a cofactor. In terms of processing, tyr-161 forms a radical intermediate that is referred to as redox-active TyrZ, YZ or Y-Z. C-terminally processed by CTPA; processing is essential to allow assembly of the oxygen-evolving complex and thus photosynthetic growth.

It is found in the plastid. Its subcellular location is the chloroplast thylakoid membrane. The enzyme catalyses 2 a plastoquinone + 4 hnu + 2 H2O = 2 a plastoquinol + O2. Photosystem II (PSII) is a light-driven water:plastoquinone oxidoreductase that uses light energy to abstract electrons from H(2)O, generating O(2) and a proton gradient subsequently used for ATP formation. It consists of a core antenna complex that captures photons, and an electron transfer chain that converts photonic excitation into a charge separation. The D1/D2 (PsbA/PsbD) reaction center heterodimer binds P680, the primary electron donor of PSII as well as several subsequent electron acceptors. The sequence is that of Photosystem II protein D1 from Heterosigma akashiwo (Chromophytic alga).